A 217-amino-acid polypeptide reads, in one-letter code: Superoxide dismutase [Mn], mitochondrial (217 aa).

The N-terminal 17 residues, 1–17 (MFVARKISPNCKPGVRG), are a transit peptide targeting the mitochondrion. Residues H43, H91, D175, and H179 each coordinate Mn(2+).

This sequence belongs to the iron/manganese superoxide dismutase family. As to quaternary structure, homotetramer. Requires Mn(2+) as cofactor.

The protein localises to the mitochondrion matrix. It catalyses the reaction 2 superoxide + 2 H(+) = H2O2 + O2. In terms of biological role, destroys superoxide anion radicals which are normally produced within the cells and which are toxic to biological systems. This chain is Superoxide dismutase [Mn], mitochondrial (Sod2), found in Drosophila melanogaster (Fruit fly).